Here is a 38-residue protein sequence, read N- to C-terminus: Potassium channel toxin alpha-KTx 3.3 (38 aa).

Disulfide bonds link C8-C28, C14-C33, and C18-C35. Residues G26–C33 are interaction with Ca(2+)-activated K(+) channels.

Belongs to the short scorpion toxin superfamily. Potassium channel inhibitor family. Alpha-KTx 03 subfamily. In terms of tissue distribution, expressed by the venom gland.

Its subcellular location is the secreted. In terms of biological role, potent inhibitor of shaker potassium channels as well as the mammalian homologs of shaker. This Leiurus hebraeus (Hebrew deathstalker scorpion) protein is Potassium channel toxin alpha-KTx 3.3.